We begin with the raw amino-acid sequence, 913 residues long: Striatin-interacting protein homolog (913 aa).

Composition is skewed to low complexity over residues 177–188 (QQQQQQQQNENE), 195–204 (TNFTTTTTTT), and 791–811 (NNNN…NNDN). Disordered stretches follow at residues 177–204 (QQQQ…TTTT) and 791–814 (NNNN…NGLT).

Belongs to the STRIP family.

This Dictyostelium discoideum (Social amoeba) protein is Striatin-interacting protein homolog (fam40).